Reading from the N-terminus, the 379-residue chain is Heme chaperone HemW (379 aa).

A Radical SAM core domain is found at 1–232 (MLQKPNSAYF…MDILAKNGYN (232 aa)). Residue Tyr-9 coordinates S-adenosyl-L-methionine. Residues Cys-15, Cys-19, and Cys-22 each coordinate [4Fe-4S] cluster. Residues Gly-60, 61–62 (GT), Glu-93, Gln-120, Arg-132, and Asp-157 each bind S-adenosyl-L-methionine.

Belongs to the anaerobic coproporphyrinogen-III oxidase family. HemW subfamily. As to quaternary structure, homodimer.

The protein resides in the cytoplasm. It is found in the cell membrane. Its function is as follows. Could serve in the delivery of heme to a membrane-localized target protein. Binds one molecule of heme per monomer, possibly covalently; heme and Fe-S cluster binding are independent. Incubation with the reductant sodium dithionite increases binding. Does not have coproporphyrinogen III dehydrogenase activity in vitro, does not complement an E.coli hemN deletion in vivo. Binds 1 Fe-S cluster, it is probably [4Fe-4S]. The cluster is coordinated with 3 cysteines and an exchangeable S-adenosyl-L-methionine; only dimeric protein has the cluster. In Lactococcus lactis subsp. lactis (strain IL1403) (Streptococcus lactis), this protein is Heme chaperone HemW.